The sequence spans 72 residues: Translation initiation factor IF-1 (72 aa).

The 72-residue stretch at 1–72 (MSNDDSIEFE…TKGRITYRMK (72 aa)) folds into the S1-like domain.

Belongs to the IF-1 family. In terms of assembly, component of the 30S ribosomal translation pre-initiation complex which assembles on the 30S ribosome in the order IF-2 and IF-3, IF-1 and N-formylmethionyl-tRNA(fMet); mRNA recruitment can occur at any time during PIC assembly.

The protein resides in the cytoplasm. Its function is as follows. One of the essential components for the initiation of protein synthesis. Stabilizes the binding of IF-2 and IF-3 on the 30S subunit to which N-formylmethionyl-tRNA(fMet) subsequently binds. Helps modulate mRNA selection, yielding the 30S pre-initiation complex (PIC). Upon addition of the 50S ribosomal subunit IF-1, IF-2 and IF-3 are released leaving the mature 70S translation initiation complex. This chain is Translation initiation factor IF-1, found in Xanthomonas campestris pv. campestris (strain B100).